The chain runs to 309 residues: Ribonuclease Z (309 aa).

Residues His-63, His-65, Asp-67, His-68, His-145, Asp-216, and His-274 each coordinate Zn(2+). The Proton acceptor role is filled by Asp-67.

This sequence belongs to the RNase Z family. As to quaternary structure, homodimer. Zn(2+) serves as cofactor.

It carries out the reaction Endonucleolytic cleavage of RNA, removing extra 3' nucleotides from tRNA precursor, generating 3' termini of tRNAs. A 3'-hydroxy group is left at the tRNA terminus and a 5'-phosphoryl group is left at the trailer molecule.. In terms of biological role, zinc phosphodiesterase, which displays some tRNA 3'-processing endonuclease activity. Probably involved in tRNA maturation, by removing a 3'-trailer from precursor tRNA. The protein is Ribonuclease Z of Streptococcus pneumoniae (strain 70585).